The chain runs to 949 residues: Leucine--tRNA ligase (949 aa).

The short motif at Pro-68 to His-79 is the 'HIGH' region element. The interval Val-540–Gly-562 is disordered. Residues Lys-722 to Ser-726 carry the 'KMSKS' region motif. Position 725 (Lys-725) interacts with ATP.

Belongs to the class-I aminoacyl-tRNA synthetase family.

It localises to the cytoplasm. It carries out the reaction tRNA(Leu) + L-leucine + ATP = L-leucyl-tRNA(Leu) + AMP + diphosphate. This is Leucine--tRNA ligase from Mycolicibacterium gilvum (strain PYR-GCK) (Mycobacterium gilvum (strain PYR-GCK)).